We begin with the raw amino-acid sequence, 470 residues long: Na(+)-translocating NADH-quinone reductase subunit A (470 aa).

It belongs to the NqrA family. As to quaternary structure, composed of six subunits; NqrA, NqrB, NqrC, NqrD, NqrE and NqrF.

The catalysed reaction is a ubiquinone + n Na(+)(in) + NADH + H(+) = a ubiquinol + n Na(+)(out) + NAD(+). Its function is as follows. NQR complex catalyzes the reduction of ubiquinone-1 to ubiquinol by two successive reactions, coupled with the transport of Na(+) ions from the cytoplasm to the periplasm. NqrA to NqrE are probably involved in the second step, the conversion of ubisemiquinone to ubiquinol. In Chlamydia caviae (strain ATCC VR-813 / DSM 19441 / 03DC25 / GPIC) (Chlamydophila caviae), this protein is Na(+)-translocating NADH-quinone reductase subunit A.